The following is a 213-amino-acid chain: Histone H1 (213 aa).

Residues 1–25 show a composition bias toward low complexity; that stretch reads MAAATASAAATPAKKAAPKKPAAAP. Disordered regions lie at residues 1–30 and 81–213; these read MAAA…HPSY and GEFV…AKSS. Positions 26 to 97 constitute an H15 domain; that stretch reads EHPSYKEMLT…GPSGTVKLAK (72 aa). Low complexity-rich tracts occupy residues 102–113, 123–137, 157–176, and 203–213; these read AAAPKKPAAKKA, KKAA…PKSA, KKAA…APVK, and PKKAATPAKSS.

The protein belongs to the histone H1/H5 family.

The protein localises to the nucleus. It is found in the chromosome. Could act as an H1-type linker histone. In Ascobolus immersus, this protein is Histone H1.